A 319-amino-acid chain; its full sequence is ATP-dependent 6-phosphofructokinase (319 aa).

Gly11 serves as a coordination point for ATP. 21–25 contributes to the ADP binding site; the sequence is RAVVR. ATP-binding positions include 72–73 and 102–105; these read RY and GDGS. Asp103 is a Mg(2+) binding site. 125 to 127 is a binding site for substrate; that stretch reads TID. The Proton acceptor role is filled by Asp127. Residue Arg154 coordinates ADP. Residues Arg162 and 169-171 each bind substrate; that span reads MGR. ADP-binding positions include 185 to 187, Arg211, and 213 to 215; these read GAE and KKH. Substrate contacts are provided by residues Glu222, Arg243, and 249–252; that span reads HVQR.

It belongs to the phosphofructokinase type A (PFKA) family. ATP-dependent PFK group I subfamily. Prokaryotic clade 'B1' sub-subfamily. In terms of assembly, homotetramer. Requires Mg(2+) as cofactor.

It is found in the cytoplasm. The enzyme catalyses beta-D-fructose 6-phosphate + ATP = beta-D-fructose 1,6-bisphosphate + ADP + H(+). It functions in the pathway carbohydrate degradation; glycolysis; D-glyceraldehyde 3-phosphate and glycerone phosphate from D-glucose: step 3/4. Allosterically activated by ADP and other diphosphonucleosides, and allosterically inhibited by phosphoenolpyruvate. Catalyzes the phosphorylation of D-fructose 6-phosphate to fructose 1,6-bisphosphate by ATP, the first committing step of glycolysis. The protein is ATP-dependent 6-phosphofructokinase of Listeria monocytogenes serotype 4b (strain CLIP80459).